Reading from the N-terminus, the 393-residue chain is Protein TsgA (393 aa).

Residues 1–10 lie on the Cytoplasmic side of the membrane; the sequence is MTNSNRIKLT. Residues 11 to 31 traverse the membrane as a helical segment; it reads WISFLSYALTGALVIVTGMVM. The Periplasmic portion of the chain corresponds to 32–50; the sequence is GNIADYFHLPVSSMSNTFT. The helical transmembrane segment at 51–71 threads the bilayer; the sequence is FLNAGILISIFLNAWLMEIIP. The Cytoplasmic segment spans residues 72–77; the sequence is LKTQLR. Residues 78 to 98 traverse the membrane as a helical segment; that stretch reads FGFILMVLAVAGLMFGHSLAL. The Periplasmic portion of the chain corresponds to 99-100; the sequence is FS. A helical transmembrane segment spans residues 101–121; the sequence is AAMFVLGLVSGITMSIGTFLI. Residues 122–133 lie on the Cytoplasmic side of the membrane; the sequence is TQLYEGRQRGSR. A helical transmembrane segment spans residues 134–154; the sequence is LLFTDSFFSMAGMIFPMVAAF. Residues 155–161 are Periplasmic-facing; that stretch reads LLARSIE. The helical transmembrane segment at 162–182 threads the bilayer; that stretch reads WYWVYACIGLVYLAIFILTFG. The Cytoplasmic portion of the chain corresponds to 183 to 205; that stretch reads CEFPALGKHAQHSQAPVVKEKWG. Residues 206–226 traverse the membrane as a helical segment; it reads IGVLFLAVAALCYILGQLGFI. At 227–244 the chain is on the periplasmic side; that stretch reads SWVPEYAKGLGMSLNDAG. A helical transmembrane segment spans residues 245–265; it reads ALVSDFWMSYMFGMWAFSFIL. At 266 to 272 the chain is on the cytoplasmic side; that stretch reads RFFDLQR. Residues 273–293 form a helical membrane-spanning segment; it reads ILTVLAGMAAVLMYLFITGTQ. Topologically, residues 294 to 297 are periplasmic; that stretch reads AHMP. A helical transmembrane segment spans residues 298–318; that stretch reads WFILTLGFFSSAIYTSIITLG. Topologically, residues 319-331 are cytoplasmic; that stretch reads SQQTKVASPKLVN. The helical transmembrane segment at 332-352 threads the bilayer; it reads FILTCGTIGTMLTFVVTGPIV. At 353–360 the chain is on the periplasmic side; the sequence is AHSGPQAA. The chain crosses the membrane as a helical span at residues 361-381; sequence LLTANGLYAVVFVMCFALGFV. Residues 382–393 are Cytoplasmic-facing; that stretch reads SRHRQHSAPATH.

This sequence belongs to the major facilitator superfamily. TsgA family.

It localises to the cell inner membrane. The sequence is that of Protein TsgA from Salmonella choleraesuis (strain SC-B67).